The primary structure comprises 276 residues: Small ribosomal subunit protein uS3 (276 aa).

Residues 39–110 (IRRETMKFFK…KINIKIKEIK (72 aa)) enclose the KH type-2 domain. A disordered region spans residues 218 to 243 (DAGQVINRKSSREKSEHFDRSRVDDR). Positions 227–243 (SSREKSEHFDRSRVDDR) are enriched in basic and acidic residues.

This sequence belongs to the universal ribosomal protein uS3 family. As to quaternary structure, part of the 30S ribosomal subunit. Forms a tight complex with proteins S10 and S14.

Functionally, binds the lower part of the 30S subunit head. Binds mRNA in the 70S ribosome, positioning it for translation. The polypeptide is Small ribosomal subunit protein uS3 (Borrelia hermsii (strain HS1 / DAH)).